A 229-amino-acid chain; its full sequence is Large ribosomal subunit protein uL1 (229 aa).

The protein belongs to the universal ribosomal protein uL1 family. In terms of assembly, part of the 50S ribosomal subunit.

Binds directly to 23S rRNA. The L1 stalk is quite mobile in the ribosome, and is involved in E site tRNA release. In terms of biological role, protein L1 is also a translational repressor protein, it controls the translation of the L11 operon by binding to its mRNA. The protein is Large ribosomal subunit protein uL1 of Magnetococcus marinus (strain ATCC BAA-1437 / JCM 17883 / MC-1).